A 329-amino-acid polypeptide reads, in one-letter code: Eukaryotic translation initiation factor 3 subunit I (329 aa).

WD repeat units lie at residues 8–47, 50–89, 145–184, 187–226, and 284–323; these read GHQR…RLGT, GHGG…NIAT, ITDS…KIHS, EHTH…LLKE, and GHFG…FDYT.

Belongs to the eIF-3 subunit I family. In terms of assembly, component of the eukaryotic translation initiation factor 3 (eIF-3) complex.

It localises to the cytoplasm. Functionally, component of the eukaryotic translation initiation factor 3 (eIF-3) complex, which is involved in protein synthesis of a specialized repertoire of mRNAs and, together with other initiation factors, stimulates binding of mRNA and methionyl-tRNAi to the 40S ribosome. The eIF-3 complex specifically targets and initiates translation of a subset of mRNAs involved in cell proliferation. The polypeptide is Eukaryotic translation initiation factor 3 subunit I (Bombyx mori (Silk moth)).